Here is a 139-residue protein sequence, read N- to C-terminus: Large ribosomal subunit protein uL16 (139 aa).

A compositionally biased stretch (basic residues) spans 1–19; the sequence is MLIPRRVKHRKQHHPKRSG. The segment at 1-25 is disordered; it reads MLIPRRVKHRKQHHPKRSGMSKGGT.

It belongs to the universal ribosomal protein uL16 family. In terms of assembly, part of the 50S ribosomal subunit.

Its function is as follows. Binds 23S rRNA and is also seen to make contacts with the A and possibly P site tRNAs. This is Large ribosomal subunit protein uL16 from Streptomyces griseus subsp. griseus (strain JCM 4626 / CBS 651.72 / NBRC 13350 / KCC S-0626 / ISP 5235).